The chain runs to 149 residues: uncharacterized protein (149 aa).

This is an uncharacterized protein from Mycoplasma pneumoniae (strain ATCC 29342 / M129 / Subtype 1) (Mycoplasmoides pneumoniae).